Here is a 203-residue protein sequence, read N- to C-terminus: Akirin-2 (203 aa).

Phosphoserine occurs at positions 18 and 21. The short motif at Pro22 to Cys27 is the Nuclear localization signal element. Ser57 bears the Phosphoserine mark. The SYVS motif motif lies at Ser200 to Ser203.

The protein belongs to the akirin family. In terms of assembly, homodimer. Interacts with IPO9; the interaction is direct. Associates (via SYVS motif) with 20S and 26S proteasomes. Interacts with SMARCD1; promoting SWI/SNF complex recruitment. Interacts with NFKBIZ. Interacts with YWHAB. In terms of processing, polyubiquitinated. Polyubiquitination is dependent of UBR5 that extends pre-ubiquitinated AKIRIN2. In terms of tissue distribution, widely expressed with the highest expression in peripheral blood leukocytes.

It localises to the nucleus. Its subcellular location is the cytoplasm. The protein resides in the membrane. Molecular adapter that acts as a bridge between a variety of multiprotein complexes, and which is involved in embryonic development, immunity, myogenesis and brain development. Plays a key role in nuclear protein degradation by promoting import of proteasomes into the nucleus: directly binds to fully assembled 20S proteasomes at one end and to nuclear import receptor IPO9 at the other end, bridging them together and mediating the import of pre-assembled proteasome complexes through the nuclear pore. Involved in innate immunity by regulating the production of interleukin-6 (IL6) downstream of Toll-like receptor (TLR): acts by bridging the NF-kappa-B inhibitor NFKBIZ and the SWI/SNF complex, leading to promote induction of IL6. Also involved in adaptive immunity by promoting B-cell activation. Involved in brain development: required for the survival and proliferation of cerebral cortical progenitor cells. Involved in myogenesis: required for skeletal muscle formation and skeletal development, possibly by regulating expression of muscle differentiation factors. Also plays a role in facilitating interdigital tissue regression during limb development. The chain is Akirin-2 from Homo sapiens (Human).